A 608-amino-acid polypeptide reads, in one-letter code: 2',5'-phosphodiesterase 12 (608 aa).

Residues 1–16 constitute a mitochondrion transit peptide; sequence MWRLPGRAALRGVRSV. Residues 91 to 111 are disordered; that stretch reads AKKSRKNRAHSSGGAACAATG. Residues 100-111 are compositionally biased toward low complexity; it reads HSSGGAACAATG. Position 216 is a phosphoserine (Ser-216). 3 residues coordinate Mg(2+): Glu-350, Asp-495, and Asn-497. Asp-495 serves as the catalytic Proton donor/acceptor.

It belongs to the CCR4/nocturin family. Requires Mg(2+) as cofactor.

It localises to the mitochondrion matrix. It catalyses the reaction Exonucleolytic cleavage of poly(A) to 5'-AMP.. Enzyme that cleaves 2',5'-phosphodiester bond linking adenosines of the 5'-triphosphorylated oligoadenylates, triphosphorylated oligoadenylates referred as 2-5A modulates the 2-5A system. Degrades triphosphorylated 2-5A to produce AMP and ATP. Also cleaves 3',5'-phosphodiester bond of oligoadenylates. Plays a role as a negative regulator of the 2-5A system that is one of the major pathways for antiviral and antitumor functions induced by interferons (IFNs). Suppression of this enzyme increases cellular 2-5A levels and decreases viral replication in cultured small-airway epithelial cells. This is 2',5'-phosphodiesterase 12 (Pde12) from Rattus norvegicus (Rat).